A 147-amino-acid chain; its full sequence is Cyanate hydratase (147 aa).

Catalysis depends on residues Arg88, Glu91, and Ser114.

Belongs to the cyanase family.

The enzyme catalyses cyanate + hydrogencarbonate + 3 H(+) = NH4(+) + 2 CO2. Functionally, catalyzes the reaction of cyanate with bicarbonate to produce ammonia and carbon dioxide. This is Cyanate hydratase from Cupriavidus necator (strain ATCC 17699 / DSM 428 / KCTC 22496 / NCIMB 10442 / H16 / Stanier 337) (Ralstonia eutropha).